Here is a 639-residue protein sequence, read N- to C-terminus: Bucky ball (639 aa).

Residues 178 to 187 (ATKECKEDPV) show a composition bias toward basic and acidic residues. Disordered regions lie at residues 178–205 (ATKECKEDPVTRPTTYSDSAYDAESSQG), 218–242 (LDSSSVHEEEEEEEKDVNEEDEPQT), and 581–614 (RSWRQVTGPQDQGRTPLRRSTCKSIHQQRPRSEY). Positions 189 to 205 (RPTTYSDSAYDAESSQG) are enriched in polar residues. Residues 225 to 240 (EEEEEEEKDVNEEDEP) show a composition bias toward acidic residues. The span at 584 to 593 (RQVTGPQDQG) shows a compositional bias: polar residues. A compositionally biased stretch (basic residues) spans 596 to 609 (PLRRSTCKSIHQQR). R627 and R629 each carry symmetric dimethylarginine. 3 short sequence motifs (RG Motif) span residues 627–628 (RG), 629–630 (RG), and 635–636 (RG).

In terms of assembly, specifically interacts (when methylated) with tdrd6 (via Tudor domain); interaction is responsible for recruitment of different protein complexes to germ plasm. Interacts with rbpms2 and dazl; interaction mediates Balbiani body formation. Interacts with kif5ba; interaction leads to buc enrichment at the embryonic cleavage furrows and mediates dorsoventral patterning. Post-translationally, symmetric dimethylarginine modification promotes interaction with tdrd6.

It localises to the cytoplasm. It is found in the cleavage furrow. Its function is as follows. Prion-like protein required for the formation of Balbiani body (electron-dense aggregates in the oocyte) and germ plasm assembly, and for the establishment of oocyte polarity during early oogenesis. Mobility and aggregation properties are improved by tudor domain-containing protein tdrd6 through interaction with dimethylated arginines Tri-RG domains. Establishes oocyte polarity through interactions with RNA-binding proteins rbpms2 and dazl, initiating a positive feedback loop amplification mechanism in the Balbiani body. Interaction of BUC protein and mRNA with rbpms2 and dazl is required to mediate Balbiani body formation. Involved in recruitment of germ plasm to embryonic cleavage furrows and dorsoventral patterning through interaction with Kinesin-1/KIF5BA. The chain is Bucky ball from Danio rerio (Zebrafish).